We begin with the raw amino-acid sequence, 149 residues long: Nucleoside diphosphate kinase 1 (149 aa).

Met1 is subject to N-acetylmethionine. The ATP site is built by Lys9, Phe57, Arg85, Thr91, Arg102, and Asn112. The active-site Pros-phosphohistidine intermediate is His115.

This sequence belongs to the NDK family. In terms of assembly, interacts with CAT1, CAT2 and CAT3. It depends on Mg(2+) as a cofactor.

It localises to the peroxisome. It is found in the nucleus. The protein resides in the cytoplasm. It catalyses the reaction a 2'-deoxyribonucleoside 5'-diphosphate + ATP = a 2'-deoxyribonucleoside 5'-triphosphate + ADP. The enzyme catalyses a ribonucleoside 5'-diphosphate + ATP = a ribonucleoside 5'-triphosphate + ADP. Major role in the synthesis of nucleoside triphosphates other than ATP. The ATP gamma phosphate is transferred to the NDP beta phosphate via a ping-pong mechanism, using a phosphorylated active-site intermediate. Plays a role in response to reactive oxygen species (ROS) stress. The polypeptide is Nucleoside diphosphate kinase 1 (NDK1) (Arabidopsis thaliana (Mouse-ear cress)).